Reading from the N-terminus, the 390-residue chain is Queuine tRNA-ribosyltransferase (390 aa).

Residue aspartate 92 is the Proton acceptor of the active site. Substrate is bound by residues 92 to 96 (DSGGF), aspartate 146, glutamine 195, and glycine 222. The segment at 253-259 (GVGTPED) is RNA binding. The Nucleophile role is filled by aspartate 272. The tract at residues 277–281 (TRNAR) is RNA binding; important for wobble base 34 recognition. Zn(2+)-binding residues include cysteine 310, cysteine 312, cysteine 315, and histidine 354.

The protein belongs to the queuine tRNA-ribosyltransferase family. As to quaternary structure, homodimer. Within each dimer, one monomer is responsible for RNA recognition and catalysis, while the other monomer binds to the replacement base PreQ1. It depends on Zn(2+) as a cofactor.

It catalyses the reaction 7-aminomethyl-7-carbaguanine + guanosine(34) in tRNA = 7-aminomethyl-7-carbaguanosine(34) in tRNA + guanine. It participates in tRNA modification; tRNA-queuosine biosynthesis. Functionally, catalyzes the base-exchange of a guanine (G) residue with the queuine precursor 7-aminomethyl-7-deazaguanine (PreQ1) at position 34 (anticodon wobble position) in tRNAs with GU(N) anticodons (tRNA-Asp, -Asn, -His and -Tyr). Catalysis occurs through a double-displacement mechanism. The nucleophile active site attacks the C1' of nucleotide 34 to detach the guanine base from the RNA, forming a covalent enzyme-RNA intermediate. The proton acceptor active site deprotonates the incoming PreQ1, allowing a nucleophilic attack on the C1' of the ribose to form the product. After dissociation, two additional enzymatic reactions on the tRNA convert PreQ1 to queuine (Q), resulting in the hypermodified nucleoside queuosine (7-(((4,5-cis-dihydroxy-2-cyclopenten-1-yl)amino)methyl)-7-deazaguanosine). This Acidovorax ebreus (strain TPSY) (Diaphorobacter sp. (strain TPSY)) protein is Queuine tRNA-ribosyltransferase.